Consider the following 159-residue polypeptide: Type IV major alpha-pilin (159 aa).

A propeptide spans 1–6 (MNAQKG) (leader sequence). Phe7 bears the N-methylphenylalanine mark. The chain crosses the membrane as a helical span at residues 7–27 (FTLIELMIVIAIIGILAAIAL). The interval 64-87 (VLSEESSTSKENIGLTSSETSTKP) is disordered. The span at 67–87 (EESSTSKENIGLTSSETSTKP) shows a compositional bias: polar residues. The cysteines at positions 137 and 156 are disulfide-linked.

Belongs to the N-Me-Phe pilin family. As to quaternary structure, major component of the type IV pilus (T4P) that plays a role in surface and attachment to the host epithelial tissues.

The protein localises to the fimbrium. It localises to the membrane. The chain is Type IV major alpha-pilin (tfpI) from Moraxella bovis.